The following is a 297-amino-acid chain: Glycerol-3-phosphate dehydrogenase [NAD(P)+] (297 aa).

NADPH is bound by residues W11, R33, and K79. Residues K79, G107, and S109 each coordinate sn-glycerol 3-phosphate. Position 111 (A111) interacts with NADPH. Sn-glycerol 3-phosphate contacts are provided by K161, D214, S224, R225, and N226. K161 functions as the Proton acceptor in the catalytic mechanism. Position 225 (R225) interacts with NADPH. Residues V249 and E251 each coordinate NADPH.

Belongs to the NAD-dependent glycerol-3-phosphate dehydrogenase family.

The protein resides in the cytoplasm. It catalyses the reaction sn-glycerol 3-phosphate + NAD(+) = dihydroxyacetone phosphate + NADH + H(+). The enzyme catalyses sn-glycerol 3-phosphate + NADP(+) = dihydroxyacetone phosphate + NADPH + H(+). It participates in membrane lipid metabolism; glycerophospholipid metabolism. Functionally, catalyzes the reduction of the glycolytic intermediate dihydroxyacetone phosphate (DHAP) to sn-glycerol 3-phosphate (G3P), the key precursor for phospholipid synthesis. The sequence is that of Glycerol-3-phosphate dehydrogenase [NAD(P)+] from Campylobacter jejuni subsp. doylei (strain ATCC BAA-1458 / RM4099 / 269.97).